A 104-amino-acid polypeptide reads, in one-letter code: Transcription elongation factor A protein-like 9 (104 aa).

Over residues Met-1–Glu-27 the composition is skewed to basic and acidic residues. Residues Met-1 to Thr-44 are disordered.

It belongs to the TFS-II family. TFA subfamily.

Its subcellular location is the nucleus. In terms of biological role, may be involved in transcriptional regulation. The sequence is that of Transcription elongation factor A protein-like 9 from Homo sapiens (Human).